Consider the following 98-residue polypeptide: Aspartyl/glutamyl-tRNA(Asn/Gln) amidotransferase subunit C (98 aa).

This sequence belongs to the GatC family. Heterotrimer of A, B and C subunits.

It carries out the reaction L-glutamyl-tRNA(Gln) + L-glutamine + ATP + H2O = L-glutaminyl-tRNA(Gln) + L-glutamate + ADP + phosphate + H(+). The enzyme catalyses L-aspartyl-tRNA(Asn) + L-glutamine + ATP + H2O = L-asparaginyl-tRNA(Asn) + L-glutamate + ADP + phosphate + 2 H(+). Allows the formation of correctly charged Asn-tRNA(Asn) or Gln-tRNA(Gln) through the transamidation of misacylated Asp-tRNA(Asn) or Glu-tRNA(Gln) in organisms which lack either or both of asparaginyl-tRNA or glutaminyl-tRNA synthetases. The reaction takes place in the presence of glutamine and ATP through an activated phospho-Asp-tRNA(Asn) or phospho-Glu-tRNA(Gln). This is Aspartyl/glutamyl-tRNA(Asn/Gln) amidotransferase subunit C from Arthrobacter sp. (strain FB24).